Here is a 288-residue protein sequence, read N- to C-terminus: Xyloglucan endotransglucosylase protein 8 (288 aa).

Positions 1 to 25 (MAASPYSIFAVQLLLLASWMLSSSS) are cleaved as a signal peptide. Residues 26–215 (SNFNQDFNIA…WTQAPFTTSY (190 aa)) form the GH16 domain. The active-site Nucleophile is E102. The active-site Proton donor is E106. Position 106 (E106) interacts with xyloglucan. N110 carries N-linked (GlcNAc...) asparagine glycosylation. Xyloglucan is bound by residues 119 to 121 (HTN), 129 to 131 (ERE), 194 to 195 (EW), and G199. 2 disulfide bridges follow: C224-C233 and C268-C282. Position 273 (R273) interacts with xyloglucan.

The protein belongs to the glycosyl hydrolase 16 family. XTH group 2 subfamily. Contains at least one intrachain disulfide bond essential for its enzymatic activity. As to expression, highly expressed in mature fruits. Very low expression in leaves, flowers, calyces and stems.

The protein localises to the secreted. The protein resides in the cell wall. It is found in the extracellular space. Its subcellular location is the apoplast. The enzyme catalyses breaks a beta-(1-&gt;4) bond in the backbone of a xyloglucan and transfers the xyloglucanyl segment on to O-4 of the non-reducing terminal glucose residue of an acceptor, which can be a xyloglucan or an oligosaccharide of xyloglucan.. Functionally, catalyzes xyloglucan endotransglycosylation (XET). Cleaves and religates xyloglucan polymers. Does not catalyze xyloglucan endohydrolysis (XEH). Overexpression in Arabidopsis transgenic plants causes accelerated dark-induced leaf senescence and higher lipid peroxidation of the leaf cells. Overexpression in transgenic tomato plants promotes fruit ripening and softening. Probably involved in cell wall restructuring during postharvest fruit softening. The protein is Xyloglucan endotransglucosylase protein 8 of Diospyros kaki (Kaki persimmon).